The chain runs to 251 residues: Tropomyosin-2 (251 aa).

A coiled-coil region spans residues 1–251 (MSGEEKLGKL…DTVADEPDDE (251 aa)).

Belongs to the tropomyosin family. In terms of assembly, homodimer. As to expression, striated muscle specific.

This Podocoryna carnea (Hydrozoan) protein is Tropomyosin-2 (TPM2).